Here is a 1135-residue protein sequence, read N- to C-terminus: MASGGNQSPPPPPAAAASSEEEEEDGDAADRAQPAGSPSHQIQQRFEELCSRLNMDEAARAEAWSSYRSMSESYTLEGNDLHWLACALYVACRKSVPTVSKGTAEGNYVSLTRILRCSEQSLIEFFNKMKKWEDMANLPPHFRERTERLERNFTVSAVIFKKYEPIFQDIFKYPQEEQPRQQRGRKQRRQPCTTSEIFHFCWVLFIYAKGNFPMISDDLVNSYHLLLCALDLVYGNALQCSNRKELVNPNFKGLSEDCHPKDSKASSDPPCVIEKLCSLHDGLVLEAKGIKEHFWKPYIRKLFEKKLLKGKEENLTGFLEPGNFGESFKAVNKAYEEYVLAAGNLDERVFLGEDAEEEVGTLSRCLSAASGTESAERTQMRDILQQHLDKSKALRVCTPLTGVRYVQENSPCVTPVSTAAHSLSRLHTMLSGLRNAPSEKLERILRSCSRDPTQAIADRLKEMYEIYSQHFQPDENFSNCAKEIANKHFRFAEMLYYKVLESVIEQEQKRLGDMDLSGVLEHDAFHRSLLACCLEVVAFSHKPPGNFPFIAEIFDVPHYHFYKVIEVFIRAEDGLCREVVKHLNQIEEQILDHLAWKTKSPLWDRIRDNENRVPTCEEVMPPQNLERTDEIYIAGSPLTPRRVGEVRADAGGLGRSITSPTTLYDRYSSPTVSTTRRRLFENDSPSEGSTSGRIPPQPLVNAVPVQNVPGETVSVTPVPGQTLVTMATATVTANNGQTVTIPVQGIANENGGITFFPVQVNVGGQAQAVAGSIQPLSAQALAGSLSSQQVTGTTLQVPGPVAIQQISPGGQQQNPGQPLTSSSIRPRKTSSLALFFRKVYYLAGVRLRDLCIKLDISDELRKKIWTCFEFSIIQCTELMMDRHLDQLLMCAIYVMAKVTKEDRSFQNIMRCYRTQPQARSQVYRSVLIKGKRRNSGSSESRSHQNSPTELNTDRASRDSSPVMRSNSTLPVPQPSSAPPTPTRLTGASSDVEEEERGDLIQFYNNIYRKQIQAFAMKYSQANAQTDTPPLSPYPFVRTGSPRRVQLSQSHPIYISPHNNEAMPSPREKIFYYFSNSPSKRLREINSMIRTGETPTKKRGILLDDGSESPAKRICPENHSALLRRLQDVANDRGSQ.

Residues 1–43 form a disordered region; that stretch reads MASGGNQSPPPPPAAAASSEEEEEDGDAADRAQPAGSPSHQIQ. Phosphoserine is present on Ser410. A Phosphothreonine modification is found at Thr414. Residues 414–613 are domain A; the sequence is TPVSTAAHSL…DRIRDNENRV (200 aa). Residues 414–1021 form a pocket; binds E1A region; sequence TPVSTAAHSL…QAFAMKYSQA (608 aa). An O-linked (GlcNAc) serine glycan is attached at Ser417. A spacer region spans residues 614–824; it reads PTCEEVMPPQ…PGQPLTSSSI (211 aa). Phosphoserine is present on Ser636. Thr639 carries the phosphothreonine modification. Ser659, Ser669, Ser684, Ser942, Ser946, Ser960, Ser965, and Ser967 each carry phosphoserine. 4 stretches are compositionally biased toward polar residues: residues 661 to 674, 683 to 692, 935 to 950, and 958 to 969; these read TTLY…TVST, DSPSEGSTSG, SGSS…PTEL, and DSSPVMRSNSTL. Disordered stretches follow at residues 661–698 and 930–994; these read TTLY…PPQP and GKRR…VEEE. The segment at 825 to 1021 is domain B; the sequence is RPRKTSSLAL…QAFAMKYSQA (197 aa). Phosphothreonine is present on Thr968. The segment covering 971–981 has biased composition (pro residues); the sequence is VPQPSSAPPTP. Ser975 and Ser976 each carry phosphoserine. Thr980 is subject to Phosphothreonine. Phosphoserine is present on residues Ser1031, Ser1064, Ser1076, and Ser1108.

This sequence belongs to the retinoblastoma protein (RB) family. Interacts with AATF and RINT1. Component of the DREAM complex (also named LINC complex) at least composed of E2F4, E2F5, LIN9, LIN37, LIN52, LIN54, MYBL1, MYBL2, RBL1, RBL2, RBBP4, TFDP1 and TFDP2. The complex exists in quiescent cells where it represses cell cycle-dependent genes. It dissociates in S phase when LIN9, LIN37, LIN52 and LIN54 form a subcomplex that binds to MYBL2. Interacts with USP4. Interacts with KMT5B, KMT5C and USP4. Interacts with PML. Interacts with RBBP9. Interacts with CD53. Post-translationally, during G0 and early G1 phase of the cell cycle, phosphorylated on Ser-636 and on 5 sites within the domain B. Phosphorylation on Ser-669 in G1 leads to its ubiquitin-dependent proteolysis.

It is found in the nucleus. Functionally, key regulator of entry into cell division. Directly involved in heterochromatin formation by maintaining overall chromatin structure and, in particular, that of constitutive heterochromatin by stabilizing histone methylation. Recruits and targets histone methyltransferases KMT5B and KMT5C, leading to epigenetic transcriptional repression. Controls histone H4 'Lys-20' trimethylation. Probably acts as a transcription repressor by recruiting chromatin-modifying enzymes to promoters. Potent inhibitor of E2F-mediated trans-activation, associates preferentially with E2F5. Binds to cyclins A and E. Binds to and may be involved in the transforming capacity of the adenovirus E1A protein. May act as a tumor suppressor. The polypeptide is Retinoblastoma-like protein 2 (Rbl2) (Mus musculus (Mouse)).